We begin with the raw amino-acid sequence, 499 residues long: Probable alpha-L-arabinofuranosidase B (499 aa).

A signal peptide spans 1–18 (MFSRRNLVALGLAATVSA). The tract at residues 19–335 (GPCDIYEAGD…ENIVAAKYVS (317 aa)) is catalytic. 3 cysteine pairs are disulfide-bonded: Cys21–Cys31, Cys81–Cys86, and Cys176–Cys177. Asn83 carries N-linked (GlcNAc...) asparagine glycosylation. An N-linked (GlcNAc...) asparagine glycan is attached at Asn202. Residue Asp219 participates in substrate binding. Glu221 functions as the Nucleophile in the catalytic mechanism. Residues Asn222, Asn223, and Gly296 each contribute to the substrate site. Residue Asp297 is the Proton donor of the active site. The tract at residues 336-499 (GSLVSGPSFT…SFEIETAFAS (164 aa)) is ABD. Cys401 and Cys439 are disulfide-bonded. Positions 416, 418, 419, 435, 463, 465, 468, and 488 each coordinate substrate.

This sequence belongs to the glycosyl hydrolase 54 family.

The protein localises to the secreted. It catalyses the reaction Hydrolysis of terminal non-reducing alpha-L-arabinofuranoside residues in alpha-L-arabinosides.. It functions in the pathway glycan metabolism; L-arabinan degradation. Functionally, alpha-L-arabinofuranosidase involved in the degradation of arabinoxylan, a major component of plant hemicellulose. Able to hydrolyze 1,5-, 1,3- and 1,2-alpha-linkages not only in L-arabinofuranosyl oligosaccharides, but also in polysaccharides containing terminal non-reducing L-arabinofuranoses in side chains, like L-arabinan, arabinogalactan and arabinoxylan. This is Probable alpha-L-arabinofuranosidase B (abfB) from Aspergillus niger (strain ATCC MYA-4892 / CBS 513.88 / FGSC A1513).